The sequence spans 238 residues: MSQSLIVALDFPGKQDVEQFLRHFEGEELFVKVGMELFYKEGPAIITYLKEKGHKIFLDLKLHDIPNTVKSAMRSLASLDVDMVNVHAAGGNSMMKAAIEGLEEGKQEGKERPICIAVTQLTSTSEAMMKKEIGIEKTLEEAVAHYAKLTKESGLDGVVCSTLEVPKLREVCGDGFVTVTPGIRLASDDVNDQVRVATPKRARELGSSYIVVGRSITKAENPLEAYKTVKQQWEGVTV.

Residues D10, K32, 59-68 (DLKLHDIPNT), T122, R184, Q193, G213, and R214 each bind substrate. The active-site Proton donor is the K61.

The protein belongs to the OMP decarboxylase family. Type 1 subfamily. As to quaternary structure, homodimer.

The catalysed reaction is orotidine 5'-phosphate + H(+) = UMP + CO2. Its pathway is pyrimidine metabolism; UMP biosynthesis via de novo pathway; UMP from orotate: step 2/2. Functionally, catalyzes the decarboxylation of orotidine 5'-monophosphate (OMP) to uridine 5'-monophosphate (UMP). This is Orotidine 5'-phosphate decarboxylase from Bacillus cereus (strain Q1).